The chain runs to 612 residues: Methionine--tRNA ligase (612 aa).

The 'HIGH' region motif lies at 12-22 (PYANGPRHIGH). Cysteine 144, cysteine 147, cysteine 157, and cysteine 160 together coordinate Zn(2+). The short motif at 348–352 (KFSSS) is the 'KMSKS' region element. Residue serine 351 participates in ATP binding.

This sequence belongs to the class-I aminoacyl-tRNA synthetase family. MetG type 1 subfamily. Monomer. It depends on Zn(2+) as a cofactor.

It localises to the cytoplasm. It catalyses the reaction tRNA(Met) + L-methionine + ATP = L-methionyl-tRNA(Met) + AMP + diphosphate. Is required not only for elongation of protein synthesis but also for the initiation of all mRNA translation through initiator tRNA(fMet) aminoacylation. The protein is Methionine--tRNA ligase of Corynebacterium kroppenstedtii (strain DSM 44385 / JCM 11950 / CIP 105744 / CCUG 35717).